Here is a 415-residue protein sequence, read N- to C-terminus: Phosphoribosylamine--glycine ligase (415 aa).

Residues 108-311 enclose the ATP-grasp domain; sequence KKIMEKYNIP…LMQHIIDLDE (204 aa). 134–191 is a binding site for ATP; sequence IENCELPVVVKKDGLAAGKGVIIADTIEAARSAIEIMYGDEEEGTVVFETFLEGEEFS. Mg(2+) contacts are provided by Glu281 and Asn283.

Belongs to the GARS family. It depends on Mg(2+) as a cofactor. Mn(2+) serves as cofactor.

It catalyses the reaction 5-phospho-beta-D-ribosylamine + glycine + ATP = N(1)-(5-phospho-beta-D-ribosyl)glycinamide + ADP + phosphate + H(+). It functions in the pathway purine metabolism; IMP biosynthesis via de novo pathway; N(1)-(5-phospho-D-ribosyl)glycinamide from 5-phospho-alpha-D-ribose 1-diphosphate: step 2/2. The polypeptide is Phosphoribosylamine--glycine ligase (Staphylococcus aureus (strain COL)).